Reading from the N-terminus, the 408-residue chain is Peptidase T (408 aa).

A Zn(2+)-binding site is contributed by histidine 78. Aspartate 80 is a catalytic residue. Aspartate 140 serves as a coordination point for Zn(2+). The Proton acceptor role is filled by glutamate 173. Glutamate 174, aspartate 196, and histidine 379 together coordinate Zn(2+).

It belongs to the peptidase M20B family. Zn(2+) is required as a cofactor.

The protein localises to the cytoplasm. The catalysed reaction is Release of the N-terminal residue from a tripeptide.. Cleaves the N-terminal amino acid of tripeptides. This Escherichia coli (strain UTI89 / UPEC) protein is Peptidase T.